The following is a 313-amino-acid chain: Homeobox protein CDX-2 (313 aa).

The residue at position 60 (Ser-60) is a Phosphoserine. Residues 113-153 (HAHHHPHHHPHHPAAAPSCASGLLQTLNPGPPGPAATGAAE) are disordered. Residues 114–124 (AHHHPHHHPHH) show a composition bias toward basic residues. Positions 185-215 (KDKYRVVYTDHQRLELEKEFHYSRYITIRRK) are interaction with DNA. The homeobox DNA-binding region spans 185–244 (KDKYRVVYTDHQRLELEKEFHYSRYITIRRKAELAATLGLSERQVKIWFQNRRAKERKIN). The segment at 227–241 (RQVKIWFQNRRAKER) is interaction with 5-mCpG DNA. Residues 242 to 313 (KINKKKLQQQ…GGVLNPTVTQ (72 aa)) form a disordered region. Low complexity-rich tracts occupy residues 249 to 261 (QQQQ…QQLA) and 271 to 300 (QPGS…PGVL). Ser-283 is modified (phosphoserine). The 4S motif; modulates transactivation activity and protein stability motif lies at 283–295 (SPVSSLQGSVPGS).

It belongs to the Caudal homeobox family. As to quaternary structure, can bind DNA as a monomer or homodimer. Post-translationally, ubiquitinated, leading to its degradation by the proteasome. Phosphorylation at Ser-60 reduces transactivation capacity. Phosphorylation at Ser-283 reduces transactivation capacity and also increases ubiquitin-dependent proteasome degradation. In terms of tissue distribution, expressed in the intestine.

The protein resides in the nucleus. In terms of biological role, transcription factor which regulates the transcription of multiple genes expressed in the intestinal epithelium. Binds to the promoter of the intestinal sucrase-isomaltase SI and activates SI transcription. Binds to the DNA sequence 5'-ATAAAAACTTAT-3' in the promoter region of VDR and activates VDR transcription. Binds to and activates transcription of LPH. Activates transcription of CLDN2 and intestinal mucin MUC2. Binds to the 5'-AATTTTTTACAACACCT-3' DNA sequence in the promoter region of CA1 and activates CA1 transcription. Important in broad range of functions from early differentiation to maintenance of the intestinal epithelial lining of both the small and large intestine. Binds preferentially to methylated DNA. The protein is Homeobox protein CDX-2 (CDX2) of Mesocricetus auratus (Golden hamster).